The chain runs to 157 residues: Eukaryotic translation initiation factor 5A-1 (157 aa).

Serine 2 is subject to N-acetylserine. Serine 2 is modified (phosphoserine). A phosphothreonine mark is found at threonine 7 and threonine 10. Lysine 51 bears the Hypusine mark. The residue at position 74 (serine 74) is a Phosphoserine. A Glycyl lysine isopeptide (Lys-Gly) (interchain with G-Cter in ubiquitin) cross-link involves residue lysine 86.

Belongs to the eIF-5A family. Homodimer. Binds to 80S ribosomes. Actively translating ribosomes show mutually exclusive binding of eIF5a (HYP2 or ANB1) and EFT1/eEF2. Interacts with DYS1 and LIA1. In terms of processing, lys-51 undergoes hypusination, a unique post-translational modification that consists in the addition of a butylamino group from spermidine to lysine side chain, leading to the formation of the unusual amino acid hypusine. eIF-5As are the only known proteins to undergo this modification, which is essential for their function.

The protein resides in the cytoplasm. In terms of biological role, translation factor that promotes translation elongation and termination, particularly upon ribosome stalling at specific amino acid sequence contexts. Binds between the exit (E) and peptidyl (P) site of the ribosome and promotes rescue of stalled ribosome: specifically required for efficient translation of polyproline-containing peptides as well as other motifs that stall the ribosome. Acts as a ribosome quality control (RQC) cofactor by joining the RQC complex to facilitate peptidyl transfer during CAT tailing step. Involved in actin dynamics and cell cycle progression, mRNA decay and probably in a pathway involved in stress response and maintenance of cell wall integrity. In Saccharomyces cerevisiae (strain ATCC 204508 / S288c) (Baker's yeast), this protein is Eukaryotic translation initiation factor 5A-1 (HYP2).